We begin with the raw amino-acid sequence, 838 residues long: Protein kintoun (838 aa).

5 disordered regions span residues 106–125, 212–238, 370–411, 557–696, and 776–838; these read RPKN…LNWS, NPTA…GKPE, LRHF…TSSP, NAPL…DSCS, and QQRR…EMDD. Residues 114–125 show a composition bias toward polar residues; sequence DPSSGSRGLNWS. Residues 370–380 are compositionally biased toward basic and acidic residues; it reads LRHFSREDSGV. Ser378 carries the post-translational modification Phosphoserine. The segment covering 389-398 has biased composition (acidic residues); that stretch reads PVEEDPDGEL. Basic and acidic residues predominate over residues 557 to 572; that stretch reads NAPLDVEFERNQEGHA. Residues 583–592 are compositionally biased toward acidic residues; that stretch reads EEEEEEEDKE. The span at 601–611 shows a compositional bias: low complexity; sequence DQQQQQQVQNK. Composition is skewed to basic residues over residues 612–623 and 673–683; these read KSGKKQRKRNKK and RSHRGILKRFS. Ser781 is modified (phosphoserine). Residues 789–802 show a composition bias toward basic and acidic residues; that stretch reads EETRGSALKQKENP.

The protein belongs to the PIH1 family. Kintoun subfamily. As to quaternary structure, interacts with Pp1alpha-96A, Pp1-87B, Pp1-13C and flw.

It localises to the cytoplasm. In terms of biological role, required for cytoplasmic pre-assembly of axonemal dyneins, thereby playing a central role in motility in cilia and flagella. Involved in pre-assembly of dynein arm complexes in the cytoplasm before intraflagellar transport loads them for the ciliary compartment. This chain is Protein kintoun, found in Drosophila sechellia (Fruit fly).